The sequence spans 280 residues: Elongation factor Ts (280 aa).

Residues 79–82 form an involved in Mg(2+) ion dislocation from EF-Tu region; it reads TDFV.

The protein belongs to the EF-Ts family.

It localises to the cytoplasm. Its function is as follows. Associates with the EF-Tu.GDP complex and induces the exchange of GDP to GTP. It remains bound to the aminoacyl-tRNA.EF-Tu.GTP complex up to the GTP hydrolysis stage on the ribosome. The protein is Elongation factor Ts of Vibrio vulnificus (strain CMCP6).